Reading from the N-terminus, the 488-residue chain is Ribulose bisphosphate carboxylase large chain (488 aa).

Asparagine 127 and threonine 177 together coordinate substrate. Lysine 179 functions as the Proton acceptor in the catalytic mechanism. Lysine 181 contributes to the substrate binding site. Residues lysine 205, aspartate 207, and glutamate 208 each coordinate Mg(2+). Lysine 205 is subject to N6-carboxylysine. The active-site Proton acceptor is the histidine 297. Substrate contacts are provided by arginine 298, histidine 330, and serine 382.

It belongs to the RuBisCO large chain family. Type I subfamily. Heterohexadecamer of 8 large chains and 8 small chains. It depends on Mg(2+) as a cofactor.

The protein localises to the plastid. It localises to the chloroplast. The catalysed reaction is 2 (2R)-3-phosphoglycerate + 2 H(+) = D-ribulose 1,5-bisphosphate + CO2 + H2O. It carries out the reaction D-ribulose 1,5-bisphosphate + O2 = 2-phosphoglycolate + (2R)-3-phosphoglycerate + 2 H(+). Functionally, ruBisCO catalyzes two reactions: the carboxylation of D-ribulose 1,5-bisphosphate, the primary event in carbon dioxide fixation, as well as the oxidative fragmentation of the pentose substrate in the photorespiration process. Both reactions occur simultaneously and in competition at the same active site. This chain is Ribulose bisphosphate carboxylase large chain, found in Chrysotila carterae (Marine alga).